Consider the following 307-residue polypeptide: Small ribosomal subunit biogenesis GTPase RsgA (307 aa).

The CP-type G domain occupies 80–237; that stretch reads KADLRQTIVS…IVDTPGIKEF (158 aa). Residues 129–132 and 180–188 contribute to the GTP site; these read NKID and GQSGVGKSS. C261, C266, H268, and C274 together coordinate Zn(2+).

This sequence belongs to the TRAFAC class YlqF/YawG GTPase family. RsgA subfamily. Monomer. Associates with 30S ribosomal subunit, binds 16S rRNA. The cofactor is Zn(2+).

It localises to the cytoplasm. Functionally, one of several proteins that assist in the late maturation steps of the functional core of the 30S ribosomal subunit. Helps release RbfA from mature subunits. May play a role in the assembly of ribosomal proteins into the subunit. Circularly permuted GTPase that catalyzes slow GTP hydrolysis, GTPase activity is stimulated by the 30S ribosomal subunit. The polypeptide is Small ribosomal subunit biogenesis GTPase RsgA (Borreliella afzelii (strain PKo) (Borrelia afzelii)).